Reading from the N-terminus, the 274-residue chain is Mitochondrial outer membrane protein porin 1 (274 aa).

It belongs to the eukaryotic mitochondrial porin (TC 1.B.8.1) family. As to expression, expressed in shoots and roots. Also expressed in callus, leaves, panicles, sheaths and stems.

It is found in the mitochondrion outer membrane. In terms of biological role, forms a channel through the mitochondrial outer membrane that allows diffusion of small hydrophilic molecules. The channel adopts an open conformation at low or zero membrane potential and a closed conformation at potentials above 30-40 mV. The open state has a weak anion selectivity whereas the closed state is cation-selective. The sequence is that of Mitochondrial outer membrane protein porin 1 (VDAC1) from Oryza sativa subsp. japonica (Rice).